The chain runs to 88 residues: UPF0213 protein EF_2693 (88 aa).

The 78-residue stretch at 5 to 82 folds into the GIY-YIG domain; that stretch reads KSHYFYVLLC…KKLTRKQKEQ (78 aa).

This sequence belongs to the UPF0213 family.

This chain is UPF0213 protein EF_2693, found in Enterococcus faecalis (strain ATCC 700802 / V583).